Here is a 456-residue protein sequence, read N- to C-terminus: Cysteine--tRNA ligase (456 aa).

Zn(2+) is bound at residue Cys-29. The short motif at 31–41 is the 'HIGH' region element; that stretch reads PTVYDYAHVGN. 3 residues coordinate Zn(2+): Cys-209, His-234, and Glu-238. Positions 267 to 271 match the 'KMSKS' region motif; the sequence is KMSKS. Lys-270 contacts ATP.

It belongs to the class-I aminoacyl-tRNA synthetase family. As to quaternary structure, monomer. The cofactor is Zn(2+).

The protein resides in the cytoplasm. It catalyses the reaction tRNA(Cys) + L-cysteine + ATP = L-cysteinyl-tRNA(Cys) + AMP + diphosphate. In Rhodospirillum centenum (strain ATCC 51521 / SW), this protein is Cysteine--tRNA ligase.